We begin with the raw amino-acid sequence, 321 residues long: Probable arabinan endo-1,5-alpha-L-arabinosidase A (321 aa).

A signal peptide spans 1–19; sequence MYRLLSVASVPLLASLVHG. Aspartate 34 functions as the Proton acceptor in the catalytic mechanism. The Proton donor role is filled by glutamate 200. Asparagine 295 carries an N-linked (GlcNAc...) asparagine glycan.

Belongs to the glycosyl hydrolase 43 family.

It localises to the secreted. The enzyme catalyses Endohydrolysis of (1-&gt;5)-alpha-arabinofuranosidic linkages in (1-&gt;5)-arabinans.. The protein operates within glycan metabolism; L-arabinan degradation. Functionally, endo-1,5-alpha-L-arabinanase involved in degradation of pectin. Its preferred substrate is linear 1,5-alpha-L-arabinan. In Aspergillus niger (strain ATCC MYA-4892 / CBS 513.88 / FGSC A1513), this protein is Probable arabinan endo-1,5-alpha-L-arabinosidase A (abnA).